A 402-amino-acid chain; its full sequence is MTTRALDTANENPEQSGSWSGVLAIAVCAFALVASEFLPVSLLTPIANDLGTTEGMAGQGIAISGAFAVLTSLFISSVAGSLNRKTLLLGLTAAMGMSGAIVALAPNYFVYMLGRALIGIVIGGFWSMSAATAMRLVPANDVPRALALVNGGNALATVVAAPLGAWLGTLIGWRGAFLCLVPVALVALAWQWTTLPSMRAGARAPGPGNVFTVFALLKRPGVMLGMLASSLFFMGQFSLFTYVRPFLETVTGVHGAHVSLVLLVIGAAGFIGTLLIDRVLQRRFFQTLVAIPLLMALIALVLTVLGGWPAIVVVLLGLWGLTGTSAPVGWWAWIARVFPEDAEAGGGLFVAVVQLSIALGSTLGGLLFDRTGYQATFFASAAMLLIAAFLTILTARSKAPAG.

The next 12 membrane-spanning stretches (helical) occupy residues 22–42, 60–80, 86–106, 108–128, 147–167, 170–190, 220–240, 256–276, 296–316, 318–338, 348–368, and 375–395; these read VLAIAVCAFALVASEFLPVSL, GIAISGAFAVLTSLFISSVAG, TLLLGLTAAMGMSGAIVALAP, YFVYMLGRALIGIVIGGFWSM, ALVNGGNALATVVAAPLGAWL, LIGWRGAFLCLVPVALVALAW, PGVMLGMLASSLFFMGQFSLF, AHVSLVLLVIGAAGFIGTLLI, ALIALVLTVLGGWPAIVVVLL, LWGLTGTSAPVGWWAWIARVF, LFVAVVQLSIALGSTLGGLLF, and ATFFASAAMLLIAAFLTILTA.

The protein to B.subtilis YwfA.

It localises to the cell membrane. Its function is as follows. Regulates the expression of oprD which encodes the imipenem-specific porin. The protein is Transcription regulatory protein OpdE (opdE) of Pseudomonas aeruginosa (strain ATCC 15692 / DSM 22644 / CIP 104116 / JCM 14847 / LMG 12228 / 1C / PRS 101 / PAO1).